Consider the following 365-residue polypeptide: Probable L-tyrosine/L-aspartate decarboxylase (365 aa).

The residue at position 224 (K224) is an N6-(pyridoxal phosphate)lysine.

The protein belongs to the group II decarboxylase family. MfnA subfamily. Requires pyridoxal 5'-phosphate as cofactor.

It carries out the reaction L-tyrosine + H(+) = tyramine + CO2. It catalyses the reaction L-aspartate + H(+) = beta-alanine + CO2. The protein operates within cofactor biosynthesis; methanofuran biosynthesis. Its pathway is cofactor biosynthesis; coenzyme A biosynthesis. Catalyzes the decarboxylation of L-tyrosine to produce tyramine for methanofuran biosynthesis. Can also catalyze the decarboxylation of L-aspartate to produce beta-alanine for coenzyme A (CoA) biosynthesis. The protein is Probable L-tyrosine/L-aspartate decarboxylase of Methanoculleus marisnigri (strain ATCC 35101 / DSM 1498 / JR1).